A 372-amino-acid chain; its full sequence is Glutamate 5-kinase (372 aa).

Lys14 is an ATP binding site. 3 residues coordinate substrate: Ser54, Asp141, and Asn153. 173–174 (TD) serves as a coordination point for ATP. The PUA domain occupies 280-358 (RGHVVIDAGA…GEIETVLGYM (79 aa)).

It belongs to the glutamate 5-kinase family.

Its subcellular location is the cytoplasm. The catalysed reaction is L-glutamate + ATP = L-glutamyl 5-phosphate + ADP. It participates in amino-acid biosynthesis; L-proline biosynthesis; L-glutamate 5-semialdehyde from L-glutamate: step 1/2. In terms of biological role, catalyzes the transfer of a phosphate group to glutamate to form L-glutamate 5-phosphate. The sequence is that of Glutamate 5-kinase from Burkholderia mallei (strain NCTC 10229).